The primary structure comprises 371 residues: Probable inactive methyltransferase Os04g0175900 (371 aa).

Residue 137 to 143 (LDVDEDN) coordinates substrate. A substrate binding region spans residues 170 to 188 (LFEYMGTNHRFNMLFNQAM). S-adenosyl-L-methionine-binding residues include Gly216, Asp239, Met260, and Lys273.

This sequence belongs to the class I-like SAM-binding methyltransferase superfamily. Cation-independent O-methyltransferase family. COMT subfamily.

This chain is Probable inactive methyltransferase Os04g0175900, found in Oryza sativa subsp. japonica (Rice).